The primary structure comprises 358 residues: Serine/threonine-protein phosphatase 2A activator 2 (358 aa).

As to quaternary structure, interacts with the phosphatase PP2A catalytic subunits PPH21 and PPH22. Forms a ternary complex with PPH21-TAP42.

Its subcellular location is the cytoplasm. It carries out the reaction [protein]-peptidylproline (omega=180) = [protein]-peptidylproline (omega=0). Its function is as follows. PPIases accelerate the folding of proteins. It catalyzes the cis-trans isomerization of proline imidic peptide bonds in oligopeptides. Acts as a regulatory subunit for TAP42-associated PP2A-like phosphatases modulating their activity or substrate specificity, probably by inducing a conformational change in the catalytic subunit, a direct target of the PPIase. Can reactivate inactive phosphatase PP2A-phosphatase methylesterase complexes (PP2Ai) in presence of ATP and Mg(2+) by dissociating the inactive form from the complex. Acts also inhibitory at high concentrations. Involved in the regulation of cell cycle progression, mitotic spindle formation and bud morphogenesis. This chain is Serine/threonine-protein phosphatase 2A activator 2 (RRD2), found in Saccharomyces cerevisiae (strain ATCC 204508 / S288c) (Baker's yeast).